The sequence spans 229 residues: DNA mismatch repair protein MutH (229 aa).

This sequence belongs to the MutH family.

The protein localises to the cytoplasm. In terms of biological role, sequence-specific endonuclease that cleaves unmethylated GATC sequences. It is involved in DNA mismatch repair. The sequence is that of DNA mismatch repair protein MutH from Escherichia coli (strain K12 / MC4100 / BW2952).